Reading from the N-terminus, the 355-residue chain is Probable nitronate monooxygenase (355 aa).

FMN is bound by residues N71, Q175, G180, G218, and Q237–T240.

This sequence belongs to the nitronate monooxygenase family. NMO class I subfamily. Requires FMN as cofactor.

It catalyses the reaction 3 propionate 3-nitronate + 3 O2 + H2O = 3 3-oxopropanoate + 2 nitrate + nitrite + H2O2 + 3 H(+). Functionally, nitronate monooxygenase that uses molecular oxygen to catalyze the oxidative denitrification of alkyl nitronates. Acts on propionate 3-nitronate (P3N), the presumed physiological substrate. Probably functions in the detoxification of P3N, a metabolic poison produced by plants and fungi as a defense mechanism. This Staphylococcus aureus (strain MSSA476) protein is Probable nitronate monooxygenase.